The primary structure comprises 1766 residues: E3 ubiquitin-protein ligase listerin (1766 aa).

Positions 1 to 11 are enriched in basic residues; the sequence is MGGKNKQRTKG. The tract at residues 1-20 is disordered; it reads MGGKNKQRTKGNVRPSSSGR. HEAT repeat units lie at residues 100 to 138, 193 to 231, 292 to 329, 335 to 372, and 512 to 549; these read KGVL…KVKK, VLQD…SLLA, AEAP…TIED, NARK…KVPP, and EKTL…DEDE. Positions 529–567 are disordered; sequence KTATKPNNRKSLKVKFSDEDESERNTENGKITEVRSNSD. Basic and acidic residues predominate over residues 551-566; the sequence is ERNTENGKITEVRSNS. HEAT repeat units follow at residues 606 to 644, 672 to 710, 916 to 953, 1184 to 1227, 1314 to 1355, and 1406 to 1447; these read EQHL…ESQE, KDMH…KWIV, QVLI…NRTE, HLLP…MIRY, GIHN…YISK, and SKLM…TQEL. The segment at 1715 to 1762 adopts an RING-type zinc-finger fold; the sequence is CMICFSVIHGSNYSLPKKACRTCKKKFHSACLYKWFTSSNKSTCPLCR.

It belongs to the LTN1 family. As to quaternary structure, component of the ribosome quality control complex (RQC), composed of at least the E3 ubiquitin ligase LTN1 and NEMF associated with the 60S ribosomal subunit. The complex probably also contains TCF25 as well as VCP/p97 and its ubiquitin-binding cofactors.

It localises to the cytoplasm. The protein resides in the cytosol. The enzyme catalyses S-ubiquitinyl-[E2 ubiquitin-conjugating enzyme]-L-cysteine + [acceptor protein]-L-lysine = [E2 ubiquitin-conjugating enzyme]-L-cysteine + N(6)-ubiquitinyl-[acceptor protein]-L-lysine.. Its pathway is protein modification; protein ubiquitination. Functionally, E3 ubiquitin-protein ligase component of the ribosome quality control complex (RQC), a ribosome-associated complex that mediates ubiquitination and extraction of incompletely synthesized nascent chains for proteasomal degradation. Within the RQC complex, LTN1 is recruited to stalled 60S ribosomal subunits by NEMF and mediates ubiquitination of stalled nascent chains. Ubiquitination leads to VCP/p97 recruitment for extraction and degradation of the incomplete translation product. The polypeptide is E3 ubiquitin-protein ligase listerin (LTN1) (Gallus gallus (Chicken)).